A 206-amino-acid polypeptide reads, in one-letter code: Uridine kinase (206 aa).

9–16 (GGSGSGKT) serves as a coordination point for ATP.

This sequence belongs to the uridine kinase family.

It is found in the cytoplasm. It carries out the reaction uridine + ATP = UMP + ADP + H(+). The catalysed reaction is cytidine + ATP = CMP + ADP + H(+). It participates in pyrimidine metabolism; CTP biosynthesis via salvage pathway; CTP from cytidine: step 1/3. The protein operates within pyrimidine metabolism; UMP biosynthesis via salvage pathway; UMP from uridine: step 1/1. This Borrelia duttonii (strain Ly) protein is Uridine kinase.